The sequence spans 93 residues: Stromal cell-derived factor 1 (93 aa).

Positions 1 to 21 (MDAKVVAVLALVLAALCLSDG) are cleaved as a signal peptide. The Receptor activation motif motif lies at 22-23 (KP). The receptor and heparin binding stretch occupies residues 29–33 (RCPCR). Intrachain disulfides connect cysteine 30/cysteine 55 and cysteine 32/cysteine 71. 3 receptor binding regions span residues 39-41 (VAR), 48-50 (KIL), and 60-70 (VARLKNNNRQV). Heparin is bound by residues 41 to 51 (RANVKHLKILN), arginine 62, glutamine 69, and lysine 85.

It belongs to the intercrine alpha (chemokine CxC) family. As to quaternary structure, monomer or homodimer; in equilibrium. Dimer formation is induced by non acidic pH and the presence of multivalent anions, and by binding to CXCR4 or heparin. Monomeric form is required for full chemotactic activity and resistance to ischemia/reperfusion injury, whereas the dimeric form acts as a partial agonist of CXCR4, stimulating Ca2+ mobilization but with no chemotactic activity and instead acts as a selective antagonist that blocks chemotaxis induced by the monomeric form. Interacts with the N-terminus of ACKR3. Interacts with integrin subunit ITGB3 (via the allosteric site (site 2)). Interacts with TNFAIP6 (via Link domain).

It is found in the secreted. Chemoattractant active on T-lymphocytes and monocytes but not neutrophils. Activates the C-X-C chemokine receptor CXCR4 to induce a rapid and transient rise in the level of intracellular calcium ions and chemotaxis. Also binds to atypical chemokine receptor ACKR3, which activates the beta-arrestin pathway and acts as a scavenger receptor for SDF-1. Acts as a positive regulator of monocyte migration and a negative regulator of monocyte adhesion via the LYN kinase. Binds to the allosteric site (site 2) of integrins and activates integrins ITGAV:ITGB3, ITGA4:ITGB1 and ITGA5:ITGB1 in a CXCR4-independent manner. Stimulates migration of monocytes and T-lymphocytes through its receptors, CXCR4 and ACKR3, and decreases monocyte adherence to surfaces coated with ICAM-1, a ligand for beta-2 integrins. SDF1A/CXCR4 signaling axis inhibits beta-2 integrin LFA-1 mediated adhesion of monocytes to ICAM-1 through LYN kinase. Plays a protective role after myocardial infarction. Has several critical functions during embryonic development; required for B-cell lymphopoiesis, myelopoiesis in bone marrow and heart ventricular septum formation. Stimulates the proliferation of bone marrow-derived B-cell progenitors in the presence of IL7 as well as growth of stromal cell-dependent pre-B-cells. This chain is Stromal cell-derived factor 1 (CXCL12), found in Felis catus (Cat).